The sequence spans 2446 residues: Transcription factor HIVEP2 (2446 aa).

The disordered stretch occupies residues 1–93; it reads MDTGDTALGQ…YPPHRPSPYS (93 aa). A compositionally biased stretch (basic and acidic residues) spans 17–28; that stretch reads GETDKASGRWRQ. 2 C2H2-type zinc fingers span residues 189–211 and 217–239; these read YICP…IRSH and YPCI…RKSH. 4 disordered regions span residues 272-303, 340-416, 543-563, and 751-985; these read HSDG…PIPL, ESSQ…PPNT, SNSV…LRGS, and SHGH…SFER. Composition is skewed to polar residues over residues 381–416 and 543–556; these read SEPS…PPNT and SNSV…NLTI. Residues 751 to 760 show a composition bias toward basic and acidic residues; the sequence is SHGHTERFDP. The span at 766–777 shows a compositional bias: polar residues; sequence QPGSPSLVSEES. The segment covering 782 to 791 has biased composition (basic and acidic residues); it reads DSDKMSDLGG. Residues 800–812 are compositionally biased toward polar residues; the sequence is SVIQHTNSLSRPN. Ser-819 carries the phosphoserine modification. Residues 863-878 are compositionally biased toward low complexity; sequence PSPSQQVQQQSYHTQP. Residues 892 to 916 show a composition bias toward basic and acidic residues; it reads RVTEEPDKPEKEKEAQSKEPEKPVE. Residues 937–943 carry the Nuclear localization signal motif; sequence PKKKRLR. Phosphoserine occurs at positions 950, 955, 1048, 1443, and 1447. Over residues 952 to 982 the composition is skewed to low complexity; that stretch reads GESSFESTGTGLSRSPSQESNLSHSSSFSMS. The disordered stretch occupies residues 1485 to 1603; it reads KDLSRPQKPQ…LEEEGKGHKR (119 aa). Composition is skewed to low complexity over residues 1510 to 1533 and 1576 to 1586; these read SGSS…SPSS and SDMSMSPQSSS. 2 consecutive C2H2-type zinc fingers follow at residues 1799–1821 and 1827–1851; these read YICE…IRTH and YVCK…SKAH. 2 disordered regions span residues 1882-1951 and 2024-2129; these read AAEK…VNVG and EECM…RRDL. The span at 1899-1925 shows a compositional bias: acidic residues; it reads DAEESDGEDGDDNDDDDEDEDDFDDQG. Over residues 2029-2053 the composition is skewed to low complexity; it reads PSEPSSSPRDFSPSSHHSSPGYDSS. 10 consecutive repeat copies span residues 2053–2056, 2059–2062, 2071–2074, 2083–2086, 2089–2092, 2106–2109, 2112–2115, 2118–2121, 2130–2133, and 2145–2148. A 10 X 4 AA tandem repeats of S-P-[RGMKC]-[RK] region spans residues 2053 to 2148; it reads SPCRDNSPKR…TTIRAPSPRR (96 aa). Basic and acidic residues predominate over residues 2078–2107; that stretch reads PRRDLSPMRHLSPRKEAALRREMSQRDVSP. The residue at position 2118 (Ser-2118) is a Phosphoserine. 3 disordered regions span residues 2242 to 2325, 2371 to 2403, and 2423 to 2446; these read PALS…QEEN, HFSR…SQTP, and HSSK…SQLH. Residues Ser-2297 and Ser-2301 each carry the phosphoserine modification. Positions 2307–2317 are enriched in polar residues; it reads KQSTSEDSLNA. Positions 2387-2396 are enriched in basic and acidic residues; that stretch reads PDLHDGEKDN. 2 positions are modified to phosphoserine: Ser-2429 and Ser-2431. The segment covering 2433-2446 has biased composition (basic and acidic residues); that stretch reads EESKDPSSEKSQLH.

In terms of assembly, interacts with TCF4. In terms of tissue distribution, expressed in brain and skeletal muscle.

The protein resides in the nucleus. In terms of biological role, this protein specifically binds to the DNA sequence 5'-GGGACTTTCC-3' which is found in the enhancer elements of numerous viral promoters such as those of SV40, CMV, or HIV1. In addition, related sequences are found in the enhancer elements of a number of cellular promoters, including those of the class I MHC, interleukin-2 receptor, somatostatin receptor II, and interferon-beta genes. It may act in T-cell activation. This Homo sapiens (Human) protein is Transcription factor HIVEP2 (HIVEP2).